The following is a 208-amino-acid chain: Small ribosomal subunit protein uS4 (208 aa).

The 62-residue stretch at R98–E159 folds into the S4 RNA-binding domain.

Belongs to the universal ribosomal protein uS4 family. Part of the 30S ribosomal subunit. Contacts protein S5. The interaction surface between S4 and S5 is involved in control of translational fidelity.

Functionally, one of the primary rRNA binding proteins, it binds directly to 16S rRNA where it nucleates assembly of the body of the 30S subunit. Its function is as follows. With S5 and S12 plays an important role in translational accuracy. The chain is Small ribosomal subunit protein uS4 from Citrifermentans bemidjiense (strain ATCC BAA-1014 / DSM 16622 / JCM 12645 / Bem) (Geobacter bemidjiensis).